A 341-amino-acid polypeptide reads, in one-letter code: Phenylalanine--tRNA ligase alpha subunit (341 aa).

Position 255 (glutamate 255) interacts with Mg(2+).

This sequence belongs to the class-II aminoacyl-tRNA synthetase family. Phe-tRNA synthetase alpha subunit type 1 subfamily. In terms of assembly, tetramer of two alpha and two beta subunits. Mg(2+) serves as cofactor.

The protein localises to the cytoplasm. The enzyme catalyses tRNA(Phe) + L-phenylalanine + ATP = L-phenylalanyl-tRNA(Phe) + AMP + diphosphate + H(+). The polypeptide is Phenylalanine--tRNA ligase alpha subunit (Natranaerobius thermophilus (strain ATCC BAA-1301 / DSM 18059 / JW/NM-WN-LF)).